A 557-amino-acid polypeptide reads, in one-letter code: Isocitrate lyase (557 aa).

Residue T53 is modified to Phosphothreonine. Residue 106 to 108 coordinates substrate; sequence SGW. D179 contributes to the Mg(2+) binding site. Residue C217 is the Proton acceptor of the active site. Substrate is bound by residues 218–219, R254, 437–441, and T471; these read GH and NLSPS.

The protein belongs to the isocitrate lyase/PEP mutase superfamily. Isocitrate lyase family. In terms of assembly, homotetramer. The cofactor is Mg(2+). Post-translationally, phosphorylated in response to elevated glucose levels, leading first to reversible inactivation of the enzyme (short-term inactivation), and at a later stage to proteolytic degradation of the protein (long-term inactivation).

The protein resides in the cytoplasm. It is found in the secreted. The protein localises to the extracellular space. Its subcellular location is the extracellular matrix. It localises to the vacuole. The enzyme catalyses D-threo-isocitrate = glyoxylate + succinate. It carries out the reaction (2S,3R)-3-hydroxybutane-1,2,3-tricarboxylate = pyruvate + succinate. It functions in the pathway carbohydrate metabolism; glyoxylate cycle; (S)-malate from isocitrate: step 1/2. Phosphorylated and inactivated after addition of glucose to the cell culture (repressing conditions). Catalyzes the formation of succinate and glyoxylate from isocitrate, a key step of the glyoxylate cycle, which operates as an anaplerotic route for replenishing the tricarboxylic acid cycle. Required for growth on ethanol or acetate, but dispensable when fermentable carbon sources are available. Also acts on 2-methylisocitrate. This chain is Isocitrate lyase, found in Saccharomyces cerevisiae (strain ATCC 204508 / S288c) (Baker's yeast).